A 155-amino-acid polypeptide reads, in one-letter code: SsrA-binding protein (155 aa).

This sequence belongs to the SmpB family.

The protein resides in the cytoplasm. In terms of biological role, required for rescue of stalled ribosomes mediated by trans-translation. Binds to transfer-messenger RNA (tmRNA), required for stable association of tmRNA with ribosomes. tmRNA and SmpB together mimic tRNA shape, replacing the anticodon stem-loop with SmpB. tmRNA is encoded by the ssrA gene; the 2 termini fold to resemble tRNA(Ala) and it encodes a 'tag peptide', a short internal open reading frame. During trans-translation Ala-aminoacylated tmRNA acts like a tRNA, entering the A-site of stalled ribosomes, displacing the stalled mRNA. The ribosome then switches to translate the ORF on the tmRNA; the nascent peptide is terminated with the 'tag peptide' encoded by the tmRNA and targeted for degradation. The ribosome is freed to recommence translation, which seems to be the essential function of trans-translation. The polypeptide is SsrA-binding protein (Bacillus cereus (strain G9842)).